We begin with the raw amino-acid sequence, 533 residues long: Multicopy suppressor of sporulation protein msa1 (533 aa).

The tract at residues 30-68 is disordered; sequence DIPPGSLSENDNSTTFIKPPLETASSSTPIPSSSSSGVL. The span at 36 to 45 shows a compositional bias: polar residues; that stretch reads LSENDNSTTF. A compositionally biased stretch (low complexity) spans 54 to 68; it reads SSSTPIPSSSSSGVL. Residues 79-158 enclose the RRM 1 domain; that stretch reads ACLFVASLNS…RHIRIERAKV (80 aa). The tract at residues 237–292 is disordered; sequence YKKKGSSPFSPPNAHSRRRKSQGKDQSNTPVIKAPAPIPFSVSSDPPSTMGRSNSA. Positions 277–292 are enriched in polar residues; sequence SVSSDPPSTMGRSNSA. Residues 365-441 form the RRM 2 domain; it reads YSIFVGQLDP…KPLRVEFRQL (77 aa).

It localises to the cytoplasm. Its function is as follows. Negative regulator of sexual differentiation. Acts by repressing the transcription of meiosis-inducing, ste11-regulated genes. The protein is Multicopy suppressor of sporulation protein msa1 (msa1) of Schizosaccharomyces pombe (strain 972 / ATCC 24843) (Fission yeast).